The sequence spans 196 residues: Ribonuclease HII (196 aa).

Residues 13–196 form the RNase H type-2 domain; sequence LLVAGVDEAG…SFSPLKKKLF (184 aa). Positions 19, 20, and 111 each coordinate a divalent metal cation.

It belongs to the RNase HII family. Mn(2+) is required as a cofactor. The cofactor is Mg(2+).

Its subcellular location is the cytoplasm. The enzyme catalyses Endonucleolytic cleavage to 5'-phosphomonoester.. In terms of biological role, endonuclease that specifically degrades the RNA of RNA-DNA hybrids. This is Ribonuclease HII (rnhB) from Aquifex aeolicus (strain VF5).